A 293-amino-acid chain; its full sequence is 4-hydroxy-tetrahydrodipicolinate synthase (293 aa).

Threonine 44 serves as a coordination point for pyruvate. Tyrosine 132 serves as the catalytic Proton donor/acceptor. Lysine 160 serves as the catalytic Schiff-base intermediate with substrate. Position 204 (isoleucine 204) interacts with pyruvate.

Belongs to the DapA family. In terms of assembly, homotetramer; dimer of dimers.

The protein resides in the cytoplasm. It catalyses the reaction L-aspartate 4-semialdehyde + pyruvate = (2S,4S)-4-hydroxy-2,3,4,5-tetrahydrodipicolinate + H2O + H(+). It functions in the pathway amino-acid biosynthesis; L-lysine biosynthesis via DAP pathway; (S)-tetrahydrodipicolinate from L-aspartate: step 3/4. Its function is as follows. Catalyzes the condensation of (S)-aspartate-beta-semialdehyde [(S)-ASA] and pyruvate to 4-hydroxy-tetrahydrodipicolinate (HTPA). This Hyphomonas neptunium (strain ATCC 15444) protein is 4-hydroxy-tetrahydrodipicolinate synthase.